Here is a 206-residue protein sequence, read N- to C-terminus: Ras-related protein Rab-18 (206 aa).

An N-acetylmethionine modification is found at Met1. GTP is bound by residues Ser17, Gly20, Lys21, Ser22, Ser23, Asp34, Pro35, Thr40, Gly66, Lys123, and Asp125. Residue Ser22 participates in Mg(2+) binding. Short sequence motifs (switch) lie at residues 31–45 (DTFD…GVDF) and 63–80 (DTAG…YYRG). Thr40 provides a ligand contact to Mg(2+). Ser144 carries the phosphoserine modification. Ala152 is a binding site for GTP. Cys199 carries the S-palmitoyl cysteine lipid modification. A Cysteine methyl ester modification is found at Cys203. A lipid anchor (S-geranylgeranyl cysteine) is attached at Cys203. Positions 204–206 (SVL) are cleaved as a propeptide — removed in mature form.

The protein belongs to the small GTPase superfamily. Rab family. As to quaternary structure, interacts (in GTP-bound form) with ZFYVE1. Interacts with ZW10 and this interaction is enhanced in the presence of ZFYVE1. Interacts with BSCL2. The cofactor is Mg(2+).

The protein resides in the endoplasmic reticulum membrane. It is found in the golgi apparatus. It localises to the cis-Golgi network membrane. Its subcellular location is the lipid droplet. The protein localises to the apical cell membrane. It carries out the reaction GTP + H2O = GDP + phosphate + H(+). Regulated by guanine nucleotide exchange factors (GEFs) which promote the exchange of bound GDP for free GTP. Regulated by GTPase activating proteins (GAPs) which increase the GTP hydrolysis activity at the ER membrane. Inhibited by GDP dissociation inhibitors (GDIs) which prevent Rab-GDP dissociation. Functionally, the small GTPases Rab are key regulators of intracellular membrane trafficking, from the formation of transport vesicles to their fusion with membranes. Rabs cycle between an inactive GDP-bound form and an active GTP-bound form that is able to recruit to membranes different sets of downstream effectors directly responsible for vesicle formation, movement, tethering and fusion. RAB18 is required for the localization of ZFYVE1 to lipid droplets and for its function in mediating the formation of endoplasmic reticulum-lipid droplets (ER-LD) contacts. Also required for maintaining endoplasmic reticulum structure. Plays a role in apical endocytosis/recycling. Plays a key role in eye and brain development and neurodegeneration. In Bos taurus (Bovine), this protein is Ras-related protein Rab-18 (RAB18).